Here is a 274-residue protein sequence, read N- to C-terminus: 4-diphosphocytidyl-2-C-methyl-D-erythritol kinase (274 aa).

Residue K14 is part of the active site. Residue 94-104 (PMQAGLGGGSS) coordinates ATP. The active site involves D134.

It belongs to the GHMP kinase family. IspE subfamily.

The enzyme catalyses 4-CDP-2-C-methyl-D-erythritol + ATP = 4-CDP-2-C-methyl-D-erythritol 2-phosphate + ADP + H(+). It functions in the pathway isoprenoid biosynthesis; isopentenyl diphosphate biosynthesis via DXP pathway; isopentenyl diphosphate from 1-deoxy-D-xylulose 5-phosphate: step 3/6. In terms of biological role, catalyzes the phosphorylation of the position 2 hydroxy group of 4-diphosphocytidyl-2C-methyl-D-erythritol. The chain is 4-diphosphocytidyl-2-C-methyl-D-erythritol kinase from Thermosipho melanesiensis (strain DSM 12029 / CIP 104789 / BI429).